The sequence spans 98 residues: MLAINLNLTVAFMLALTGVLVYRSHLMSTLLCLEGMMLSLFILMTLLIVHFHMFSMSMAPLILLVFSACEAGVGLALLVKISSTHGNDYVQNLNLLQC.

3 helical membrane-spanning segments follow: residues 1–21, 25–45, and 57–79; these read MLAINLNLTVAFMLALTGVLV, HLMSTLLCLEGMMLSLFILMT, and SMAPLILLVFSACEAGVGLALLV.

Belongs to the complex I subunit 4L family. As to quaternary structure, core subunit of respiratory chain NADH dehydrogenase (Complex I) which is composed of 45 different subunits.

The protein resides in the mitochondrion inner membrane. The catalysed reaction is a ubiquinone + NADH + 5 H(+)(in) = a ubiquinol + NAD(+) + 4 H(+)(out). Its function is as follows. Core subunit of the mitochondrial membrane respiratory chain NADH dehydrogenase (Complex I) which catalyzes electron transfer from NADH through the respiratory chain, using ubiquinone as an electron acceptor. Part of the enzyme membrane arm which is embedded in the lipid bilayer and involved in proton translocation. The chain is NADH-ubiquinone oxidoreductase chain 4L (MT-ND4L) from Dasyurus hallucatus (Northern quoll).